The following is a 394-amino-acid chain: Elongation factor Tu (394 aa).

The tr-type G domain occupies 10 to 204 (KPHVNVGTIG…ALDSYIPEPE (195 aa)). The segment at 19–26 (GHVDHGKT) is G1. 19 to 26 (GHVDHGKT) serves as a coordination point for GTP. T26 serves as a coordination point for Mg(2+). Positions 60-64 (GITIA) are G2. The segment at 81 to 84 (DCPG) is G3. GTP is bound by residues 81-85 (DCPGH) and 136-139 (NKCD). The tract at residues 136-139 (NKCD) is G4. Residues 174 to 176 (SAL) are G5.

It belongs to the TRAFAC class translation factor GTPase superfamily. Classic translation factor GTPase family. EF-Tu/EF-1A subfamily. In terms of assembly, monomer.

It is found in the cytoplasm. The enzyme catalyses GTP + H2O = GDP + phosphate + H(+). In terms of biological role, GTP hydrolase that promotes the GTP-dependent binding of aminoacyl-tRNA to the A-site of ribosomes during protein biosynthesis. The polypeptide is Elongation factor Tu (Vibrio campbellii (strain ATCC BAA-1116)).